The chain runs to 212 residues: Telomere repeats-binding bouquet formation protein 2 (212 aa).

Belongs to the TERB2 family. As to quaternary structure, component of the MAJIN-TERB1-TERB2 complex.

Its function is as follows. Meiosis-specific telomere-associated protein involved in meiotic telomere attachment to the nucleus inner membrane, a crucial step for homologous pairing and synapsis. Component of the MAJIN-TERB1-TERB2 complex, which promotes telomere cap exchange by mediating attachment of telomeric DNA to the inner nuclear membrane and replacement of the protective cap of telomeric chromosomes: in early meiosis, the MAJIN-TERB1-TERB2 complex associates with telomeric DNA and the shelterin/telosome complex. During prophase, the complex matures and promotes release of the shelterin/telosome complex from telomeric DNA. The chain is Telomere repeats-binding bouquet formation protein 2 from Danio rerio (Zebrafish).